We begin with the raw amino-acid sequence, 1217 residues long: Splicing factor 3B subunit 3 (1217 aa).

Interaction with PHF5A, SF3B1 and SF3B5 stretches follow at residues 105-119 (ETFG…VPGQ) and 145-168 (NRDA…TLVY). Ser156 is modified (phosphoserine). Interaction with SF3B1 and SF3B5 stretches follow at residues 193–231 (DNDP…LEEH) and 786–804 (RKFV…ETDH). The interval 1028-1049 (TYPRWVTTASLLDYDTVAGADK) is interaction with SF3B1. The segment at 1100–1123 (TVLSLQKTTLIPGGSESLVYTTLS) is interaction with SF3B5. Thr1200 is subject to Phosphothreonine.

The protein belongs to the RSE1 family. In terms of assembly, component of the 17S U2 SnRNP complex, a ribonucleoprotein complex that contains small nuclear RNA (snRNA) U2 and a number of specific proteins. Part of the SF3B subcomplex of the 17S U2 SnRNP complex. SF3B associates with the splicing subcomplex SF3A and a 12S RNA unit to form the U2 small nuclear ribonucleoproteins complex (U2 snRNP). Within the SF3B subcomplex, interacts directly with SF3B1 (via HEAT domain), SF3B5 and PHF5A. Identified in the spliceosome A complex; remains associated with the spliceosome throughout the splicing process. Component of the spliceosome B complex. Identified in the spliceosome C complex. Identified in the spliceosome E complex. Component of the minor (U12-type spliceosome) spliceosome. Within this complex, interacts with SCNM1. Associates with the STAGA transcription coactivator-HAT complex. Interacts with SUPT3H. Interacts with TAF3.

It is found in the nucleus. Its function is as follows. Component of the 17S U2 SnRNP complex of the spliceosome, a large ribonucleoprotein complex that removes introns from transcribed pre-mRNAs. The 17S U2 SnRNP complex (1) directly participates in early spliceosome assembly and (2) mediates recognition of the intron branch site during pre-mRNA splicing by promoting the selection of the pre-mRNA branch-site adenosine, the nucleophile for the first step of splicing. Within the 17S U2 SnRNP complex, SF3B3 is part of the SF3B subcomplex, which is required for 'A' complex assembly formed by the stable binding of U2 snRNP to the branchpoint sequence in pre-mRNA. Sequence independent binding of SF3A and SF3B subcomplexes upstream of the branch site is essential, it may anchor U2 snRNP to the pre-mRNA. May also be involved in the assembly of the 'E' complex. Also acts as a component of the minor spliceosome, which is involved in the splicing of U12-type introns in pre-mRNAs. This chain is Splicing factor 3B subunit 3 (Sf3b3), found in Mus musculus (Mouse).